The following is a 192-amino-acid chain: Phosphoheptose isomerase (192 aa).

In terms of domain architecture, SIS spans 37-192; it reads LADSFKAGGK…IQLIEKEMVK (156 aa). 52–54 is a substrate binding site; the sequence is NGG. Positions 61 and 65 each coordinate Zn(2+). Substrate-binding positions include Glu65, 93 to 94, 119 to 121, Ser124, and Gln172; these read ND and STS. Zn(2+) contacts are provided by Gln172 and His180.

Belongs to the SIS family. GmhA subfamily. Homotetramer. The cofactor is Zn(2+).

The protein resides in the cytoplasm. The catalysed reaction is 2 D-sedoheptulose 7-phosphate = D-glycero-alpha-D-manno-heptose 7-phosphate + D-glycero-beta-D-manno-heptose 7-phosphate. The protein operates within carbohydrate biosynthesis; D-glycero-D-manno-heptose 7-phosphate biosynthesis; D-glycero-alpha-D-manno-heptose 7-phosphate and D-glycero-beta-D-manno-heptose 7-phosphate from sedoheptulose 7-phosphate: step 1/1. Functionally, catalyzes the isomerization of sedoheptulose 7-phosphate in D-glycero-D-manno-heptose 7-phosphate. This is Phosphoheptose isomerase from Shigella dysenteriae serotype 1 (strain Sd197).